The primary structure comprises 184 residues: Guanylate kinase (184 aa).

Residues 5-183 form the Guanylate kinase-like domain; the sequence is KKLIIITGPS…TVKEVLKIIK (179 aa). 12 to 19 contacts ATP; the sequence is GPSGVGKG.

It belongs to the guanylate kinase family.

It localises to the cytoplasm. It carries out the reaction GMP + ATP = GDP + ADP. Its function is as follows. Essential for recycling GMP and indirectly, cGMP. This chain is Guanylate kinase, found in Prochlorococcus marinus subsp. pastoris (strain CCMP1986 / NIES-2087 / MED4).